Reading from the N-terminus, the 154-residue chain is CASP-like protein 5B3 (154 aa).

The Cytoplasmic segment spans residues 1–17 (MKDVVGSPGTWSGMSLR). A helical transmembrane segment spans residues 18–38 (VSQCVFAGASVVAMASAYGFS). Asn-39 is a glycosylation site (N-linked (GlcNAc...) asparagine). The Extracellular portion of the chain corresponds to 39 to 42 (NYTA). The helical transmembrane segment at 43–63 (FCYLIASMGLQLLWSFGLACL) threads the bilayer. Topologically, residues 64-77 (DIYSLQTKRDLHNP) are cytoplasmic. A helical membrane pass occupies residues 78-98 (VLVSLFVVGDWVTAILSFAAA). At 99–129 (SASAGVTILFERDVHFCRMYPQLSCGRYELS) the chain is on the extracellular side. A helical transmembrane segment spans residues 130-150 (VILAFITWSFIATSAVSMFWL). At 151–154 (LASL) the chain is on the cytoplasmic side.

It belongs to the Casparian strip membrane proteins (CASP) family. In terms of assembly, homodimer and heterodimers.

It localises to the cell membrane. This Oryza sativa subsp. indica (Rice) protein is CASP-like protein 5B3.